A 95-amino-acid polypeptide reads, in one-letter code: Protein TusB (95 aa).

The protein belongs to the DsrH/TusB family. Heterohexamer, formed by a dimer of trimers. The hexameric TusBCD complex contains 2 copies each of TusB, TusC and TusD. The TusBCD complex interacts with TusE.

It is found in the cytoplasm. Functionally, part of a sulfur-relay system required for 2-thiolation of 5-methylaminomethyl-2-thiouridine (mnm(5)s(2)U) at tRNA wobble positions. This Klebsiella pneumoniae subsp. pneumoniae (strain ATCC 700721 / MGH 78578) protein is Protein TusB.